Here is a 502-residue protein sequence, read N- to C-terminus: Rab11 family-interacting protein 4B (502 aa).

Disordered regions lie at residues 1 to 49 (MSIQ…EEGI) and 71 to 98 (SALS…TTSS). The span at 15–29 (EEGRGVERDSDRDSA) shows a compositional bias: basic and acidic residues. Over residues 71 to 80 (SALSSASLNE) the composition is skewed to polar residues. Residues 81 to 93 (EQFEDYGEGEDGD) show a composition bias toward acidic residues. Positions 228-482 (DVKTKLKQEN…EEINLRLRQY (255 aa)) form a coiled coil. The 63-residue stretch at 439 to 501 (EAKNLFATQT…DHNPSILEIK (63 aa)) folds into the FIP-RBD domain.

In terms of assembly, homodimer. Forms a complex with Rab11 (rab11a or rab11b) and arf6.

It localises to the recycling endosome membrane. The protein resides in the cleavage furrow. The protein localises to the midbody. Its subcellular location is the cytoplasmic vesicle. In terms of biological role, acts as a regulator of endocytic traffic by participating in membrane delivery. Required for the abscission step in cytokinesis, possibly by acting as an 'address tag' delivering recycling endosome membranes to the cleavage furrow during late cytokinesis. This Danio rerio (Zebrafish) protein is Rab11 family-interacting protein 4B (rab11fip4b).